Here is a 585-residue protein sequence, read N- to C-terminus: Probable multidrug resistance ABC transporter ATP-binding/permease protein YheI (585 aa).

An ABC transmembrane type-1 domain is found at 19-304; that stretch reads YTIAIVLLLA…IGELINVMQR (286 aa). A run of 6 helical transmembrane segments spans residues 21–41, 57–77, 127–147, 149–169, 249–269, and 279–299; these read IAIV…KLLG, LLFY…MSYF, AVSL…MFMM, IFLT…IIPL, VKLL…FLVF, and VSFN…GELI. The 236-residue stretch at 337 to 572 folds into the ABC transporter domain; the sequence is IVFSHVSFTY…NGWYREQYER (236 aa). 371–378 is a binding site for ATP; sequence GKTGSGKT.

The protein belongs to the ABC transporter superfamily. In terms of assembly, heterodimer composed of YheH and YheI.

The protein localises to the cell membrane. With respect to regulation, inhibited by ortho-vanadate. Functionally, involved in the transport of four structurally unrelated drugs, including doxorubicin and mitoxantrone. Transmembrane domains (TMD) form a pore in the membrane and the ATP-binding domain (NBD) is responsible for energy generation. The polypeptide is Probable multidrug resistance ABC transporter ATP-binding/permease protein YheI (yheI) (Bacillus subtilis (strain 168)).